Here is a 153-residue protein sequence, read N- to C-terminus: Ribonuclease H (153 aa).

One can recognise an RNase H type-1 domain in the interval 1 to 141; the sequence is MKKIQLFTDG…CDDLARRAAE (141 aa). Mg(2+)-binding residues include D9, E47, D69, and D133.

This sequence belongs to the RNase H family. Monomer. Mg(2+) is required as a cofactor.

The protein localises to the cytoplasm. The enzyme catalyses Endonucleolytic cleavage to 5'-phosphomonoester.. In terms of biological role, endonuclease that specifically degrades the RNA of RNA-DNA hybrids. The polypeptide is Ribonuclease H (Psychromonas ingrahamii (strain DSM 17664 / CCUG 51855 / 37)).